The primary structure comprises 568 residues: Sulfite reductase [NADPH] hemoprotein beta-component (568 aa).

[4Fe-4S] cluster-binding residues include C426, C432, C471, and C475. C475 is a siroheme binding site.

It belongs to the nitrite and sulfite reductase 4Fe-4S domain family. In terms of assembly, alpha(8)-beta(8). The alpha component is a flavoprotein, the beta component is a hemoprotein. Requires siroheme as cofactor. It depends on [4Fe-4S] cluster as a cofactor.

It catalyses the reaction hydrogen sulfide + 3 NADP(+) + 3 H2O = sulfite + 3 NADPH + 4 H(+). It participates in sulfur metabolism; hydrogen sulfide biosynthesis; hydrogen sulfide from sulfite (NADPH route): step 1/1. Component of the sulfite reductase complex that catalyzes the 6-electron reduction of sulfite to sulfide. This is one of several activities required for the biosynthesis of L-cysteine from sulfate. The polypeptide is Sulfite reductase [NADPH] hemoprotein beta-component (Xylella fastidiosa (strain M23)).